Reading from the N-terminus, the 354-residue chain is 4-hydroxy-3-methylbut-2-en-1-yl diphosphate synthase (flavodoxin) (354 aa).

Cysteine 262, cysteine 265, cysteine 297, and glutamate 304 together coordinate [4Fe-4S] cluster.

Belongs to the IspG family. It depends on [4Fe-4S] cluster as a cofactor.

The enzyme catalyses (2E)-4-hydroxy-3-methylbut-2-enyl diphosphate + oxidized [flavodoxin] + H2O + 2 H(+) = 2-C-methyl-D-erythritol 2,4-cyclic diphosphate + reduced [flavodoxin]. The protein operates within isoprenoid biosynthesis; isopentenyl diphosphate biosynthesis via DXP pathway; isopentenyl diphosphate from 1-deoxy-D-xylulose 5-phosphate: step 5/6. Functionally, converts 2C-methyl-D-erythritol 2,4-cyclodiphosphate (ME-2,4cPP) into 1-hydroxy-2-methyl-2-(E)-butenyl 4-diphosphate. In Helicobacter hepaticus (strain ATCC 51449 / 3B1), this protein is 4-hydroxy-3-methylbut-2-en-1-yl diphosphate synthase (flavodoxin).